The sequence spans 339 residues: Ketol-acid reductoisomerase (NADP(+)) (339 aa).

Residues 1–182 (MRVYYDRDAD…GGGRSGVIET (182 aa)) form the KARI N-terminal Rossmann domain. NADP(+)-binding positions include 24-27 (YGSQ), Arg-48, Ser-51, Thr-53, and 83-86 (DEHQ). His-108 is a catalytic residue. Gly-134 is a binding site for NADP(+). The KARI C-terminal knotted domain occupies 183-328 (TFKEECETDL…AELRAMMPWI (146 aa)). The Mg(2+) site is built by Asp-191, Glu-195, Glu-227, and Glu-231. Position 252 (Ser-252) interacts with substrate.

It belongs to the ketol-acid reductoisomerase family. Mg(2+) serves as cofactor.

It carries out the reaction (2R)-2,3-dihydroxy-3-methylbutanoate + NADP(+) = (2S)-2-acetolactate + NADPH + H(+). The catalysed reaction is (2R,3R)-2,3-dihydroxy-3-methylpentanoate + NADP(+) = (S)-2-ethyl-2-hydroxy-3-oxobutanoate + NADPH + H(+). It functions in the pathway amino-acid biosynthesis; L-isoleucine biosynthesis; L-isoleucine from 2-oxobutanoate: step 2/4. The protein operates within amino-acid biosynthesis; L-valine biosynthesis; L-valine from pyruvate: step 2/4. Involved in the biosynthesis of branched-chain amino acids (BCAA). Catalyzes an alkyl-migration followed by a ketol-acid reduction of (S)-2-acetolactate (S2AL) to yield (R)-2,3-dihydroxy-isovalerate. In the isomerase reaction, S2AL is rearranged via a Mg-dependent methyl migration to produce 3-hydroxy-3-methyl-2-ketobutyrate (HMKB). In the reductase reaction, this 2-ketoacid undergoes a metal-dependent reduction by NADPH to yield (R)-2,3-dihydroxy-isovalerate. This Rhizorhabdus wittichii (strain DSM 6014 / CCUG 31198 / JCM 15750 / NBRC 105917 / EY 4224 / RW1) (Sphingomonas wittichii) protein is Ketol-acid reductoisomerase (NADP(+)).